Here is a 269-residue protein sequence, read N- to C-terminus: Lck-interacting transmembrane adapter 1 (269 aa).

At 1 to 7 the chain is on the extracellular side; the sequence is MRPPVPS. Residues 8 to 28 form a helical; Signal-anchor for type III membrane protein membrane-spanning segment; sequence APLALWVLGCFSLLLWLWALC. 2 S-palmitoyl cysteine lipidation sites follow: Cys28 and Cys31. Residues 29–269 are Cytoplasmic-facing; the sequence is TACHRKRAQR…VYESIKEMGL (241 aa). A disordered region spans residues 102 to 133; that stretch reads STRSQVPNSAFPPRQLPRAPPAAPATAPSTSS. A compositionally biased stretch (pro residues) spans 115–124; sequence RQLPRAPPAA. A phosphotyrosine mark is found at Tyr137, Tyr175, and Tyr207. The tract at residues 137 to 140 is interaction with GRB2; the sequence is YSNV. 2 interaction with CSK regions span residues 175 to 178 and 207 to 210; these read YACI and YSRV. A phosphotyrosine; by LYN or LCK mark is found at Tyr242 and Tyr261. Residues 242-245 form an interaction with LCK and PIK3R1 region; it reads YEAI. The segment at 261–264 is interaction with LCK, PLCG2 and PIK3R1; sequence YESI. Ser263 carries the phosphoserine modification.

In terms of assembly, when phosphorylated in response to TCR stimulation and/or CD4 costimulation, interacts with LCK, CSK, FYN, PTPN11/SHP2, GRB2, PIK3R1 and GRAP2. When phosphorylated in response to BCR activation, interacts with LYN, PIK3R1, PLCG2 and GRB2. In terms of processing, palmitoylation of Cys-28 and Cys-31 is required for raft targeting. Phosphorylated on tyrosines upon TCR activation and/or CD4 coreceptor stimulation, or upon BCR stimulation; which leads to the recruitment of SH2-containing proteins. Expressed in spleen and lung. Present in primary B-cells and peripheral T-cells (at protein level).

Its subcellular location is the cell membrane. Involved in BCR (B-cell antigen receptor)-mediated signaling in B-cells and TCR (T-cell antigen receptor)-mediated T-cell signaling in T-cells. In absence of TCR signaling, may be involved in CD4-mediated inhibition of T-cell activation. Couples activation of these receptors and their associated kinases with distal intracellular events such as calcium mobilization or MAPK activation through the recruitment of PLCG2, GRB2, GRAP2, and other signaling molecules. The chain is Lck-interacting transmembrane adapter 1 (Lime1) from Mus musculus (Mouse).